Consider the following 473-residue polypeptide: Crt homolog 1 (473 aa).

Residues 1 to 49 (MTNNDKEKQPLLSSINNEDDNGATINIVEPVPWYSNIPQKIKNSMSKET) lie on the Cytoplasmic side of the membrane. A helical membrane pass occupies residues 50–70 (ITILIYVVLYVTSGVINSVLL). Topologically, residues 71–80 (KKVMNKFTNY) are vacuolar. The helical transmembrane segment at 81-101 (AFFLSQLTNFGYVPIFGAVTA) threads the bilayer. Residues 102–121 (YKIFFTKDIPQETRDFPTRK) lie on the Cytoplasmic side of the membrane. Residues 122 to 142 (FAIMGALDAITGFFVVIGGVS) traverse the membrane as a helical segment. Residues 143 to 146 (TSGP) are Vacuolar-facing. Residues 147–167 (LQQLLNQAIIPFTMIASFIFL) form a helical membrane-spanning segment. Residues 168 to 175 (KERYSLIQ) lie on the Cytoplasmic side of the membrane. Residues 176-196 (LGGALVIIGGVVTSLIPSLLG) traverse the membrane as a helical segment. At 197-207 (GSSGGNKPFWN) the chain is on the vacuolar side. The chain crosses the membrane as a helical span at residues 208–228 (FFYLLSVIPGALSNVYKDIGF). Over 229-248 (QAVADMDVWYLQYWDSLYQS) the chain is Cytoplasmic. Residues 249–269 (IFGLFLFPVNNWLPPPATVKF) form a helical membrane-spanning segment. At 270–322 (EQILPFMKEGAECLAGINSIIPSYINGTSSFTATSCTYAPDATITCDDCHNAW) the chain is on the vacuolar side. N295 carries N-linked (GlcNAc...) asparagine glycosylation. The helical transmembrane segment at 323–343 (IVIILYMTINIIYNIFILLVL) threads the bilayer. Topologically, residues 344 to 352 (KHAGATVYS) are cytoplasmic. Residues 353–373 (IANTLRLPLTNIVFSIHFIMG) form a helical membrane-spanning segment. Residue S374 is a topological domain, vacuolar. A helical membrane pass occupies residues 375 to 395 (AVSPFSGLSVAGLVIILVGLG). The Cytoplasmic segment spans residues 396 to 473 (GYRVGSMIKQ…AANNNNYGDA (78 aa)).

The protein belongs to the CRT-like transporter family.

Its subcellular location is the vacuole membrane. Nutrient transporter. Involved in maintaining the osmotic homeostasis of the digestive vacuole. The protein is Crt homolog 1 (crtp1) of Dictyostelium discoideum (Social amoeba).